Here is a 117-residue protein sequence, read N- to C-terminus: Ribosome maturation factor RimP (117 aa).

This sequence belongs to the RimP family.

Its subcellular location is the cytoplasm. Functionally, required for maturation of 30S ribosomal subunits. The chain is Ribosome maturation factor RimP from Rickettsia prowazekii (strain Madrid E).